The chain runs to 442 residues: Tubulin beta chain (442 aa).

Positions 11, 69, 138, 142, 143, 144, 204, and 226 each coordinate GTP. Glu69 is a binding site for Mg(2+).

It belongs to the tubulin family. In terms of assembly, dimer of alpha and beta chains. A typical microtubule is a hollow water-filled tube with an outer diameter of 25 nm and an inner diameter of 15 nM. Alpha-beta heterodimers associate head-to-tail to form protofilaments running lengthwise along the microtubule wall with the beta-tubulin subunit facing the microtubule plus end conferring a structural polarity. Microtubules usually have 13 protofilaments but different protofilament numbers can be found in some organisms and specialized cells. It depends on Mg(2+) as a cofactor.

It localises to the cytoplasm. The protein resides in the cytoskeleton. In terms of biological role, tubulin is the major constituent of microtubules, a cylinder consisting of laterally associated linear protofilaments composed of alpha- and beta-tubulin heterodimers. Microtubules grow by the addition of GTP-tubulin dimers to the microtubule end, where a stabilizing cap forms. Below the cap, tubulin dimers are in GDP-bound state, owing to GTPase activity of alpha-tubulin. In Trypanosoma cruzi, this protein is Tubulin beta chain.